We begin with the raw amino-acid sequence, 328 residues long: Homoarginine-6-hydroxylase 2-ODD-233 (328 aa).

One can recognise a Fe2OG dioxygenase domain in the interval 183–288 (FWVCRLIGYP…VSVAFFYESN (106 aa)). Fe cation contacts are provided by H210, D212, and H268. R278 contacts 2-oxoglutarate.

It belongs to the iron/ascorbate-dependent oxidoreductase family. Fe(2+) is required as a cofactor. The cofactor is L-ascorbate. In terms of tissue distribution, expressed in roots and shoots.

Its subcellular location is the cytoplasm. The enzyme catalyses L-homoarginine + 2-oxoglutarate + O2 = 6-hydroxy-L-homoarginine + succinate + CO2. The catalysed reaction is melatonin + 2-oxoglutarate + O2 = 2-hydroxymelatonin + succinate + CO2. Functionally, 2-oxoglutarate-dependent dioxygenase catalyzing homoarginine 6-hydroxylation thus producing 6-hydroxy-L-homoarginine. Guanidine (Gd) is in turn synthesized by the spontaneous conversion of 6-hydroxy-L-homoarginine to (S)-2-amino-6-oxohexanoate (RHEA:79843); guanidine is a nitrogen-rich compound that can serve as a defense or signaling substance. Involved in melatonin degradation. Catalyzes the hydroxylation of melatonin to produce 2-hydroxymelatonin. In Oryza sativa subsp. japonica (Rice), this protein is Homoarginine-6-hydroxylase 2-ODD-233.